The following is a 284-amino-acid chain: 4-diphosphocytidyl-2-C-methyl-D-erythritol kinase (284 aa).

Lysine 14 is an active-site residue. Proline 98 to serine 108 is an ATP binding site. Residue aspartate 140 is part of the active site.

It belongs to the GHMP kinase family. IspE subfamily.

It catalyses the reaction 4-CDP-2-C-methyl-D-erythritol + ATP = 4-CDP-2-C-methyl-D-erythritol 2-phosphate + ADP + H(+). It functions in the pathway isoprenoid biosynthesis; isopentenyl diphosphate biosynthesis via DXP pathway; isopentenyl diphosphate from 1-deoxy-D-xylulose 5-phosphate: step 3/6. Catalyzes the phosphorylation of the position 2 hydroxy group of 4-diphosphocytidyl-2C-methyl-D-erythritol. This is 4-diphosphocytidyl-2-C-methyl-D-erythritol kinase from Shewanella sp. (strain ANA-3).